Reading from the N-terminus, the 314-residue chain is Small ribosomal subunit protein uS2c (314 aa).

Belongs to the universal ribosomal protein uS2 family.

It is found in the plastid. It localises to the chloroplast. This chain is Small ribosomal subunit protein uS2c (rps2), found in Stigeoclonium helveticum (Green alga).